The following is a 76-amino-acid chain: Putative snRNP Sm-like protein (76 aa).

Residues 4–76 (RPLDVIHRSL…VLAISPVDIE (73 aa)) enclose the Sm domain.

It belongs to the snRNP Sm proteins family.

The sequence is that of Putative snRNP Sm-like protein from Thermococcus gammatolerans (strain DSM 15229 / JCM 11827 / EJ3).